An 86-amino-acid chain; its full sequence is Large ribosomal subunit protein eL43 (86 aa).

Positions 40, 43, 58, and 61 each coordinate Zn(2+). Residues 40-61 (CPFCRSKAVIREAYGIYRCKKC) form a C4-type zinc finger.

It belongs to the eukaryotic ribosomal protein eL43 family. Putative zinc-binding subfamily. In terms of assembly, part of the 50S ribosomal subunit. Zn(2+) serves as cofactor.

Binds to the 23S rRNA. The polypeptide is Large ribosomal subunit protein eL43 (Nanoarchaeum equitans (strain Kin4-M)).